The sequence spans 296 residues: MNNNAFHFPVLLDAICKLIEDLPVKSDLIYIDSTLGEGVHAKAILEKYDFLSLVGIERDPQILERARQFLSIFEERITYFNDWFDNFFVNYPLNVKANFILVDLGISMFHYKGSKKGFSFLEDEPLDMRLCSSSCKISAAEIVNTYSKYDLEALIYDLSNEHYSRRISKAIVEYRKIKKIETTKELQSIISKVYPFSKVKINPATKTFQALRIYVNDELARLKRSLPFWVENLAKDGILAIITFHSIEDRIVKDFFRSLSCDLYAKISKKPIMPSFDEIKKNKPSRSAKLRVVKKL.

Residues 38–40, E57, F80, D103, and H110 contribute to the S-adenosyl-L-methionine site; that span reads GVH.

Belongs to the methyltransferase superfamily. RsmH family.

Its subcellular location is the cytoplasm. The catalysed reaction is cytidine(1402) in 16S rRNA + S-adenosyl-L-methionine = N(4)-methylcytidine(1402) in 16S rRNA + S-adenosyl-L-homocysteine + H(+). In terms of biological role, specifically methylates the N4 position of cytidine in position 1402 (C1402) of 16S rRNA. The protein is Ribosomal RNA small subunit methyltransferase H of Borreliella burgdorferi (strain ATCC 35210 / DSM 4680 / CIP 102532 / B31) (Borrelia burgdorferi).